Reading from the N-terminus, the 949-residue chain is Coiled-coil domain-containing protein 66 (949 aa).

2 positions are modified to phosphothreonine: Thr115 and Thr121. Position 369 is a phosphoserine (Ser369). Residues 474–558 are a coiled coil; it reads QVEEKCRKKQ…EQRIRELAQK (85 aa). The mediates localization to cilia, centrosomes and spindle microtubules and the interaction with PCM1, CEP290, CEP104 and CSPP1 stretch occupies residues 570–949; it reads GVDTIQIEYN…NQEENFGSSF (380 aa). Position 606 is a phosphoserine (Ser606). Disordered regions lie at residues 691–714 and 789–809; these read QTKHMKKYPKRPDWNINKPPKRYI and SFSKERSPSSPVPAVKNRTQQ.

Homodimer; disulfide-linked. Interacts with CEP290. Interacts with PCM1. Interacts with ARMC9, TOGARAM1, CSPP1 and CEP104. Interacts with CDK5RAP2, CEP152, CEP192, TBG1 and PRC1.

Its subcellular location is the cytoplasm. It localises to the cytoskeleton. The protein localises to the microtubule organizing center. The protein resides in the centrosome. It is found in the centriolar satellite. Its subcellular location is the cell projection. It localises to the cilium. The protein localises to the cilium basal body. The protein resides in the cilium axoneme. It is found in the photoreceptor inner segment. Its subcellular location is the photoreceptor outer segment. Functionally, microtubule-binding protein required for ciliogenesis. May function in ciliogenesis by mediating the transport of proteins like BBS4 to the cilium, but also through the organization of the centriolar satellites. Required for the assembly of signaling-competent cilia with proper structure and length. Mediates this function in part by regulating transition zone assembly and basal body recruitment of the IFT-B complex. Cooperates with the ciliopathy proteins CSPP1 and CEP104 during cilium length regulation. Plays two important roles during cell division. First, is required for mitotic progression via regulation of spindle assembly, organization and orientation, levels of spindle microtubules (MTs), kinetochore-fiber integrity, and chromosome alignment. Second, functions during cytokinesis in part by regulating assembly and organization of central spindle and midbody MTs Plays a role in retina morphogenesis and/or homeostasis. In Pongo abelii (Sumatran orangutan), this protein is Coiled-coil domain-containing protein 66.